A 49-amino-acid polypeptide reads, in one-letter code: uncharacterized protein (49 aa).

A helical transmembrane segment spans residues 31 to 48 (PDLYTIIVSYFSIFSLFF).

It is found in the membrane. This is an uncharacterized protein from Saccharomyces cerevisiae (strain ATCC 204508 / S288c) (Baker's yeast).